Reading from the N-terminus, the 147-residue chain is Protein BUD31 homolog (147 aa).

A Nuclear localization signal motif is present at residues 8 to 12 (RRVRK).

The protein belongs to the BUD31 (G10) family. Identified in the spliceosome C complex.

It localises to the nucleus. Involved in pre-mRNA splicing process. This Caenorhabditis elegans protein is Protein BUD31 homolog.